Reading from the N-terminus, the 233-residue chain is Coproporphyrinogen-III oxidase 2, chloroplastic (233 aa).

A chloroplast-targeting transit peptide spans M1–S48. A substrate-binding site is contributed by S174. Catalysis depends on H188, which acts as the Proton donor.

The protein belongs to the aerobic coproporphyrinogen-III oxidase family. As to quaternary structure, homodimer.

It localises to the plastid. The protein localises to the chloroplast. It carries out the reaction coproporphyrinogen III + O2 + 2 H(+) = protoporphyrinogen IX + 2 CO2 + 2 H2O. Its pathway is porphyrin-containing compound metabolism; protoporphyrin-IX biosynthesis; protoporphyrinogen-IX from coproporphyrinogen-III (O2 route): step 1/1. It participates in porphyrin-containing compound metabolism; chlorophyll biosynthesis. Its function is as follows. Key enzyme in heme biosynthesis. Catalyzes the oxidative decarboxylation of propionic acid side chains of rings A and B of coproporphyrinogen III. In Arabidopsis thaliana (Mouse-ear cress), this protein is Coproporphyrinogen-III oxidase 2, chloroplastic (CPX2).